We begin with the raw amino-acid sequence, 255 residues long: Chlorocatechol 1,2-dioxygenase (255 aa).

Tyr130, Tyr164, His188, and His190 together coordinate Fe cation.

This sequence belongs to the intradiol ring-cleavage dioxygenase family. Requires Fe(3+) as cofactor.

The catalysed reaction is 3,5-dichlorocatechol + O2 = (2E,4E)-2,4-dichloromuconate + 2 H(+). It participates in aromatic compound metabolism; 3-chlorocatechol degradation. Preferentially converts 3,5-dichlorocatechol as opposed to other chlorinated catechols. Retains diminished activity toward non-chlorinated substrates. This chain is Chlorocatechol 1,2-dioxygenase (tfdC), found in Burkholderia cepacia (Pseudomonas cepacia).